The primary structure comprises 623 residues: Leucine-rich repeat, immunoglobulin-like domain and transmembrane domain-containing protein 1 (623 aa).

An N-terminal signal peptide occupies residues M1–G21. Residues F22 to P59 enclose the LRRNT domain. Over F22–Q526 the chain is Lumenal. 5 LRR repeats span residues D60–P81, R84–G105, R108–D129, K132–F153, and N156–S177. A glycan (N-linked (GlcNAc...) asparagine) is linked at N156. In terms of domain architecture, LRRCT spans N201 to G253. Positions L266 to G335 constitute an Ig-like C2-type domain. C275 and C328 form a disulfide bridge. Residues N296 and N455 are each glycosylated (N-linked (GlcNAc...) asparagine). The Fibronectin type-III domain maps to M430 to V518. A helical membrane pass occupies residues L527–V547. Residues C548 to C623 lie on the Cytoplasmic side of the membrane. The LRR 6 repeat unit spans residues Y571–E594.

May form a homodimer. Interacts with LRIT2; may form a heterodimer with LRIT2. Interacts (via its N-terminal extracellular domain) with metabotropic glutamate receptor GRM6. Interacts (via its extreme C-terminus) with the scaffold protein FRMPD2 (via the third PDZ domain); the interaction leads to their colocalization in photoreceptor synapses.

Its subcellular location is the endoplasmic reticulum membrane. It is found in the cell projection. The protein resides in the dendrite. In terms of biological role, photoreceptor synaptic protein essential for normal vision. Involved in synapse formation in cone photoreceptor cells. The sequence is that of Leucine-rich repeat, immunoglobulin-like domain and transmembrane domain-containing protein 1 (LRIT1) from Homo sapiens (Human).